The following is a 228-amino-acid chain: Elongation factor 1-beta 1 (228 aa).

Ala2 carries the N-acetylalanine modification. The GST C-terminal domain occupies 14-65 (LKTLEEHLAGKTYISGDQLSVDDVKVYAAVLENPGDGFPNASKWYDSVASHL). Residues 75 to 139 (GVRVGGGVAP…DTKKTKESGK (65 aa)) form a disordered region. A compositionally biased stretch (acidic residues) spans 95 to 115 (PAADGDGDDDDDIDLFADETE). Over residues 116-138 (DEKKAAEEREAAKKDTKKTKESG) the composition is skewed to basic and acidic residues.

The protein belongs to the EF-1-beta/EF-1-delta family. As to quaternary structure, EF-1 is composed of 4 subunits: alpha, beta (1B-alpha=beta'), delta (1B-beta), and gamma (1B-gamma).

The protein resides in the cell membrane. Its function is as follows. EF-1-beta and EF-1-delta stimulate the exchange of GDP bound to EF-1-alpha to GTP. This is Elongation factor 1-beta 1 from Arabidopsis thaliana (Mouse-ear cress).